The sequence spans 436 residues: Trigger factor (436 aa).

The region spanning 163–248 (GDTVNIDFDG…VNEIKYKDVP (86 aa)) is the PPIase FKBP-type domain.

This sequence belongs to the FKBP-type PPIase family. Tig subfamily.

It localises to the cytoplasm. The enzyme catalyses [protein]-peptidylproline (omega=180) = [protein]-peptidylproline (omega=0). In terms of biological role, involved in protein export. Acts as a chaperone by maintaining the newly synthesized protein in an open conformation. Functions as a peptidyl-prolyl cis-trans isomerase. This Staphylococcus saprophyticus subsp. saprophyticus (strain ATCC 15305 / DSM 20229 / NCIMB 8711 / NCTC 7292 / S-41) protein is Trigger factor.